Reading from the N-terminus, the 1139-residue chain is DNA-directed RNA polymerase subunit beta (1139 aa).

A disordered region spans residues 1085 to 1139 (ADTSNRHTPSRPTYESVTSEDLSPSPAFTRVLRTADANASRSLEEDEDEEEEEDF). Residues 1086–1106 (DTSNRHTPSRPTYESVTSEDL) are compositionally biased toward polar residues. The span at 1128-1139 (EEDEDEEEEEDF) shows a compositional bias: acidic residues.

It belongs to the RNA polymerase beta chain family. In terms of assembly, in cyanobacteria the RNAP catalytic core is composed of 2 alpha, 1 beta, 1 beta', 1 gamma and 1 omega subunit. When a sigma factor is associated with the core the holoenzyme is formed, which can initiate transcription.

The catalysed reaction is RNA(n) + a ribonucleoside 5'-triphosphate = RNA(n+1) + diphosphate. DNA-dependent RNA polymerase catalyzes the transcription of DNA into RNA using the four ribonucleoside triphosphates as substrates. This is DNA-directed RNA polymerase subunit beta from Synechococcus sp. (strain JA-2-3B'a(2-13)) (Cyanobacteria bacterium Yellowstone B-Prime).